The chain runs to 102 residues: MAIKHDDGTVLMRQEQKLKPPSMYQVLLLNDDYTPMEFVVMILQEYFSKDRETATQIMLMVHRDGKGICGVYPKDIASTKVELVLNHARKAGHPLQCVMEEV.

It belongs to the ClpS family. Binds to the N-terminal domain of the chaperone ClpA.

Functionally, involved in the modulation of the specificity of the ClpAP-mediated ATP-dependent protein degradation. The polypeptide is ATP-dependent Clp protease adapter protein ClpS (Herminiimonas arsenicoxydans).